Consider the following 268-residue polypeptide: Ribosomal RNA small subunit methyltransferase A (268 aa).

The S-adenosyl-L-methionine site is built by Asn-23, Leu-25, Gly-50, Glu-72, Asp-94, and Asn-116.

Belongs to the class I-like SAM-binding methyltransferase superfamily. rRNA adenine N(6)-methyltransferase family. RsmA subfamily.

The protein resides in the cytoplasm. The catalysed reaction is adenosine(1518)/adenosine(1519) in 16S rRNA + 4 S-adenosyl-L-methionine = N(6)-dimethyladenosine(1518)/N(6)-dimethyladenosine(1519) in 16S rRNA + 4 S-adenosyl-L-homocysteine + 4 H(+). Specifically dimethylates two adjacent adenosines (A1518 and A1519) in the loop of a conserved hairpin near the 3'-end of 16S rRNA in the 30S particle. May play a critical role in biogenesis of 30S subunits. The protein is Ribosomal RNA small subunit methyltransferase A of Mycoplasmoides gallisepticum (strain R(low / passage 15 / clone 2)) (Mycoplasma gallisepticum).